The following is a 419-amino-acid chain: Esterase FrsA (419 aa).

The protein belongs to the FrsA family.

It carries out the reaction a carboxylic ester + H2O = an alcohol + a carboxylate + H(+). Catalyzes the hydrolysis of esters. The sequence is that of Esterase FrsA from Photobacterium profundum (strain SS9).